A 479-amino-acid polypeptide reads, in one-letter code: UDP-N-acetylmuramate--L-alanine ligase (479 aa).

124-130 (GSHGKTT) contributes to the ATP binding site.

Belongs to the MurCDEF family.

The protein resides in the cytoplasm. It catalyses the reaction UDP-N-acetyl-alpha-D-muramate + L-alanine + ATP = UDP-N-acetyl-alpha-D-muramoyl-L-alanine + ADP + phosphate + H(+). It functions in the pathway cell wall biogenesis; peptidoglycan biosynthesis. Cell wall formation. In Synechococcus sp. (strain RCC307), this protein is UDP-N-acetylmuramate--L-alanine ligase.